Consider the following 381-residue polypeptide: MESNEDVERLLCQKYPGLAAELQPSGACIIRGVLGSEDTWRRLKLYLPHHPALHGFQLYVQESLEYKLYTSANLKLQDDWLLEDFLDHLPKILPAQKAPTVPKELCREGNIYYDILALYKSNEYCLQVDEACSMIRFSEFTDFEQHYLELKIPSLLLLDHSLPDCVSLGEMLTKSAGNLEEALNLFRKLLEDLRPFYDNFMDIDELCHVLQPSPISSKHKTRLFPLKDRVYLKLTIADPFACIASMSLKIIGPTEEVARLRHVLSDGLSNWDSEMNIHKNLLRMFDLCYFPMPDWSDGPKLDEEDNEELRCNICFAYRLDGGEVPLVSCDNAKCVLKCHAVCLEEWFKTLMDGKTFLEVSFGQCPFCKAKLSTSFAALLND.

A UBC-RWD region (URD) region spans residues 110–293 (NIYYDILALY…MFDLCYFPMP (184 aa)). The RING-CH-type; degenerate zinc-finger motif lies at 303–374 (EEDNEELRCN…PFCKAKLSTS (72 aa)). Residues cysteine 311, cysteine 314, cysteine 329, cysteine 334, histidine 339, cysteine 342, cysteine 364, and cysteine 367 each contribute to the Zn(2+) site.

As to quaternary structure, interacts (via C-terminus) with FANCI and Fancd2.

The protein resides in the nucleus. It catalyses the reaction S-ubiquitinyl-[E2 ubiquitin-conjugating enzyme]-L-cysteine + [acceptor protein]-L-lysine = [E2 ubiquitin-conjugating enzyme]-L-cysteine + N(6)-ubiquitinyl-[acceptor protein]-L-lysine.. It participates in protein modification; protein ubiquitination. Ubiquitin ligase protein that mediates monoubiquitination of Fancd2. Ubiquitination of Fancd2 is stimulated by ionising radiation. Together with Fancd2, and probably FANCI, involved in DNA repair of damage caused by agents that induce interstrand cross-links but not agents that cause double strand breaks. In Drosophila melanogaster (Fruit fly), this protein is E3 ubiquitin-protein ligase Fancl.